We begin with the raw amino-acid sequence, 296 residues long: Aldo-keto reductase MYCFIDRAFT_156381 (296 aa).

Asp14 provides a ligand contact to NADP(+). The Proton donor role is filled by Tyr19. Position 83 (His83) interacts with substrate. NADP(+) is bound by residues 113–114, Gln139, 168–178, and Arg191; these read CN and SPLAGGMLTDR. Tyr201 contacts substrate. 255-263 contacts NADP(+); that stretch reads SSAEQLESN.

Belongs to the aldo/keto reductase family. Aldo/keto reductase 2 subfamily.

It functions in the pathway secondary metabolite biosynthesis. Its function is as follows. Aldo-keto reductase; part of the gene cluster that mediates the biosynthesis of an emodin derivative that may be involved in black Sigatoka disease of banana. The pathway begins with the synthesis of atrochrysone thioester by the polyketide synthase PKS8-1. The atrochrysone carboxyl ACP thioesterase MYCFIDRAFT_190111 then breaks the thioester bond and releases the atrochrysone carboxylic acid from PKS8-1. The decarboxylase MYCFIDRAFT_34057 then catalyzes the concerted decarboxylation-elimination required to convert atochrysone carboxylic acid into emodin anthrone, which is further oxidized to emodin by the anthrone oxygenase MYCFIDRAFT_34418. The functions of the other tailoring enzymes as well as the final product of the cluster have still to be identified. This is Aldo-keto reductase MYCFIDRAFT_156381 from Pseudocercospora fijiensis (strain CIRAD86) (Black leaf streak disease fungus).